The following is a 194-amino-acid chain: UPF0301 protein BPEN_258 (194 aa).

It belongs to the UPF0301 (AlgH) family.

The protein is UPF0301 protein BPEN_258 of Blochmanniella pennsylvanica (strain BPEN).